The following is a 356-amino-acid chain: Alanine racemase (356 aa).

The Proton acceptor; specific for D-alanine role is filled by K35. K35 carries the post-translational modification N6-(pyridoxal phosphate)lysine. Substrate is bound at residue R130. Y253 acts as the Proton acceptor; specific for L-alanine in catalysis. M301 provides a ligand contact to substrate.

Belongs to the alanine racemase family. Requires pyridoxal 5'-phosphate as cofactor.

The catalysed reaction is L-alanine = D-alanine. It functions in the pathway amino-acid biosynthesis; D-alanine biosynthesis; D-alanine from L-alanine: step 1/1. Functionally, catalyzes the interconversion of L-alanine and D-alanine. May also act on other amino acids. The chain is Alanine racemase (alr) from Erwinia tasmaniensis (strain DSM 17950 / CFBP 7177 / CIP 109463 / NCPPB 4357 / Et1/99).